The following is a 247-amino-acid chain: Protein SODIUM POTASSIUM ROOT DEFECTIVE 3 (247 aa).

The segment at 130 to 166 is disordered; that stretch reads GSTGQDTVATEESEASAPKRGSSGPVEEKKKSSGSGS. Residues 167–235 form the HMA domain; the sequence is DQVVVLRVSL…KVKNAQFWTP (69 aa). Residues cysteine 180 and cysteine 183 each contribute to the a metal cation site.

Its subcellular location is the cytoplasm. Functionally, heavy metal-associated protein involved in salt tolerance. The polypeptide is Protein SODIUM POTASSIUM ROOT DEFECTIVE 3 (Arabidopsis thaliana (Mouse-ear cress)).